The sequence spans 183 residues: Large ribosomal subunit protein uL18 (183 aa).

Belongs to the universal ribosomal protein uL18 family. Part of the 50S ribosomal subunit. Contacts the 5S and 23S rRNAs.

In terms of biological role, this is one of the proteins that bind and probably mediate the attachment of the 5S RNA into the large ribosomal subunit, where it forms part of the central protuberance. The chain is Large ribosomal subunit protein uL18 from Halobacterium salinarum (strain ATCC 29341 / DSM 671 / R1).